Reading from the N-terminus, the 610-residue chain is Dihydroxy-acid dehydratase (610 aa).

Mg(2+) is bound at residue D81. Position 122 (C122) interacts with [2Fe-2S] cluster. 2 residues coordinate Mg(2+): D123 and K124. Residue K124 is modified to N6-carboxylysine. Position 193 (C193) interacts with [2Fe-2S] cluster. Mg(2+) is bound at residue E489. The active-site Proton acceptor is the S515.

Belongs to the IlvD/Edd family. In terms of assembly, homodimer. [2Fe-2S] cluster is required as a cofactor. Mg(2+) serves as cofactor.

The enzyme catalyses (2R)-2,3-dihydroxy-3-methylbutanoate = 3-methyl-2-oxobutanoate + H2O. It catalyses the reaction (2R,3R)-2,3-dihydroxy-3-methylpentanoate = (S)-3-methyl-2-oxopentanoate + H2O. It participates in amino-acid biosynthesis; L-isoleucine biosynthesis; L-isoleucine from 2-oxobutanoate: step 3/4. It functions in the pathway amino-acid biosynthesis; L-valine biosynthesis; L-valine from pyruvate: step 3/4. Functions in the biosynthesis of branched-chain amino acids. Catalyzes the dehydration of (2R,3R)-2,3-dihydroxy-3-methylpentanoate (2,3-dihydroxy-3-methylvalerate) into 2-oxo-3-methylpentanoate (2-oxo-3-methylvalerate) and of (2R)-2,3-dihydroxy-3-methylbutanoate (2,3-dihydroxyisovalerate) into 2-oxo-3-methylbutanoate (2-oxoisovalerate), the penultimate precursor to L-isoleucine and L-valine, respectively. This is Dihydroxy-acid dehydratase from Xylella fastidiosa (strain 9a5c).